We begin with the raw amino-acid sequence, 90 residues long: U7-theraphotoxin-Hhn1c (90 aa).

A signal peptide spans 1–19; that stretch reads MKTAIFTVVLALAVFAVLS. Residues 20 to 50 constitute a propeptide that is removed on maturation; sequence FGWEANEKALSEEFTELIHEKEAASETEARE. Intrachain disulfides connect Cys51/Cys65, Cys58/Cys70, and Cys64/Cys81.

This sequence belongs to the neurotoxin 10 (Hwtx-1) family. 13 (Hntx-13) subfamily. Expressed by the venom gland.

The protein localises to the secreted. Functionally, ion channel inhibitor. In Cyriopagopus hainanus (Chinese bird spider), this protein is U7-theraphotoxin-Hhn1c.